Reading from the N-terminus, the 61-residue chain is Large ribosomal subunit protein uL30 (61 aa).

It belongs to the universal ribosomal protein uL30 family. As to quaternary structure, part of the 50S ribosomal subunit.

This chain is Large ribosomal subunit protein uL30, found in Latilactobacillus sakei subsp. sakei (strain 23K) (Lactobacillus sakei subsp. sakei).